The primary structure comprises 305 residues: MIKQRTLKRIVQATGVGLHTGKKVTLTLRPAPANTGVIYRRTDLNPPVDFPADAKSVRDTMLCTCLVNEHDVRISTVEHLNAALAGLGIDNIVIEVNAPEIPIMDGSAAPFVYLLLDAGIDELNCAKKFVRIKETVRVEDGDKWAEFKPYNGFSLDFTIDFNHPAIDSSNQRYAMNFSADAFMRQISRARTFGFMRDIEYLQSRGLCLGGSFDCAIVVDDYRVLNEDGLRFEDEFVRHKMLDAIGDLFMCGHNIIGAFTAYKSGHALNNKLLQAVLAKQEAWEYVTFQDDAELPLAFKAPSAVLA.

Positions 79, 238, and 242 each coordinate Zn(2+). His-265 acts as the Proton donor in catalysis.

It belongs to the LpxC family. The cofactor is Zn(2+).

The enzyme catalyses a UDP-3-O-[(3R)-3-hydroxyacyl]-N-acetyl-alpha-D-glucosamine + H2O = a UDP-3-O-[(3R)-3-hydroxyacyl]-alpha-D-glucosamine + acetate. The protein operates within glycolipid biosynthesis; lipid IV(A) biosynthesis; lipid IV(A) from (3R)-3-hydroxytetradecanoyl-[acyl-carrier-protein] and UDP-N-acetyl-alpha-D-glucosamine: step 2/6. In terms of biological role, catalyzes the hydrolysis of UDP-3-O-myristoyl-N-acetylglucosamine to form UDP-3-O-myristoylglucosamine and acetate, the committed step in lipid A biosynthesis. This is UDP-3-O-acyl-N-acetylglucosamine deacetylase from Shigella dysenteriae serotype 1 (strain Sd197).